The following is a 247-amino-acid chain: Granzyme B (247 aa).

The signal sequence occupies residues 1 to 18 (MQPILLLLAFLLLPRADA). Positions 19-20 (GE) are cleaved as a propeptide — activation peptide. A Peptidase S1 domain is found at 21–245 (IIGGHEAKPH…FVHWIKKTMK (225 aa)). A disulfide bridge connects residues cysteine 49 and cysteine 65. Histidine 64 functions as the Charge relay system in the catalytic mechanism. N-linked (GlcNAc...) asparagine glycosylation is found at asparagine 71 and asparagine 104. The Charge relay system role is filled by aspartate 108. Intrachain disulfides connect cysteine 142/cysteine 209 and cysteine 173/cysteine 188. The active-site Charge relay system is serine 203.

It belongs to the peptidase S1 family. Granzyme subfamily.

The protein resides in the secreted. Its subcellular location is the cytolytic granule. The catalysed reaction is Preferential cleavage: -Asp-|-Xaa- &gt;&gt; -Asn-|-Xaa- &gt; -Met-|-Xaa-, -Ser-|-Xaa-.. Inactivated by the serine protease inhibitor diisopropylfluorophosphate. In terms of biological role, abundant protease in the cytosolic granules of cytotoxic T-cells and NK-cells which activates caspase-independent pyroptosis when delivered into the target cell through the immunological synapse. It cleaves after Asp. Once delivered into the target cell, acts by catalyzing cleavage of gasdermin-E (GSDME), releasing the pore-forming moiety of GSDME, thereby triggering pyroptosis and target cell death. Seems to be linked to an activation cascade of caspases (aspartate-specific cysteine proteases) responsible for apoptosis execution. Cleaves caspase-3, -9 and -10 (CASP3, CASP9 and CASP10, respectively) to give rise to active enzymes mediating apoptosis. Cleaves and activates CASP7 in response to bacterial infection, promoting plasma membrane repair. The polypeptide is Granzyme B (Homo sapiens (Human)).